Reading from the N-terminus, the 145-residue chain is Large ribosomal subunit protein eL32 (145 aa).

The protein belongs to the eukaryotic ribosomal protein eL32 family.

The protein is Large ribosomal subunit protein eL32 (rpl32e) of Aeropyrum pernix (strain ATCC 700893 / DSM 11879 / JCM 9820 / NBRC 100138 / K1).